We begin with the raw amino-acid sequence, 444 residues long: MKAVESNFDGLVGPTHNYSGLSVGNIASKSNQSGVSNPKQAVKQGLEKMKALHDMGFVQGVLAPQERPDIHTLRRLGFSGSDSEVLKKSYQYSPQLLAACSSASSMWTANAGTVSPSADTTDGKVHFTPANLINKFHRSIEDQVTGNILKATFSDEKHFVHHEALPHSDYFGDEGAANHTRFCREYGEQGVEFFVFGKSAFNESYLAPKKYPARQTLEASEAIARTHGLREQFTVFAQQNPDVIDRGVFHNDVIAVGNKNTLFCHQQAFLNQEKVKSDLCASYGSGFNVIEVPTDKVSVQDAVETYLFNSQLITKADGTTLIILPEHCRQNSRVWAYLNELIEQKRGIDELHTFDLKQSMQNGGGPACLRLRVVLNEAEQKAVNQHTLMSEELFTTLNLWADKHYRDRIEDKDLADSQLLVESRSALDELTQIMHLGSIYPFQK.

Residues Ser-19–Ser-28, Asn-110, and His-137–Arg-138 each bind substrate. Residue Glu-174 is part of the active site. Arg-214 serves as a coordination point for substrate. His-250 is an active-site residue. Residues Asp-252 and Asn-362 each contribute to the substrate site. Cys-368 serves as the catalytic Nucleophile.

The protein belongs to the succinylarginine dihydrolase family. Homodimer.

The catalysed reaction is N(2)-succinyl-L-arginine + 2 H2O + 2 H(+) = N(2)-succinyl-L-ornithine + 2 NH4(+) + CO2. The protein operates within amino-acid degradation; L-arginine degradation via AST pathway; L-glutamate and succinate from L-arginine: step 2/5. Catalyzes the hydrolysis of N(2)-succinylarginine into N(2)-succinylornithine, ammonia and CO(2). The sequence is that of N-succinylarginine dihydrolase from Aliivibrio fischeri (strain MJ11) (Vibrio fischeri).